Here is a 157-residue protein sequence, read N- to C-terminus: Protein MG115 (157 aa).

It belongs to the CinA family.

The polypeptide is Protein MG115 (Mycoplasma genitalium (strain ATCC 33530 / DSM 19775 / NCTC 10195 / G37) (Mycoplasmoides genitalium)).